We begin with the raw amino-acid sequence, 733 residues long: Catalase-peroxidase (733 aa).

The segment at residues 96-219 (WHSAGTYRTG…LAAVQMGLIY (124 aa)) is a cross-link (tryptophyl-tyrosyl-methioninium (Trp-Tyr) (with M-245)). Catalysis depends on His97, which acts as the Proton acceptor. The tryptophyl-tyrosyl-methioninium (Tyr-Met) (with W-96) cross-link spans 219–245 (YVNPEGPNGNPDPLAAAKDIRETFARM). His260 serves as a coordination point for heme b.

This sequence belongs to the peroxidase family. Peroxidase/catalase subfamily. In terms of assembly, homodimer or homotetramer. The cofactor is heme b. In terms of processing, formation of the three residue Trp-Tyr-Met cross-link is important for the catalase, but not the peroxidase activity of the enzyme.

It catalyses the reaction H2O2 + AH2 = A + 2 H2O. It carries out the reaction 2 H2O2 = O2 + 2 H2O. Its function is as follows. Bifunctional enzyme with both catalase and broad-spectrum peroxidase activity. The sequence is that of Catalase-peroxidase from Geobacter sp. (strain M21).